Consider the following 119-residue polypeptide: ATP-dependent Clp protease adapter protein ClpS (119 aa).

Residues 1-24 (MGPESPDSIPPHGPGNGDGDQDLD) are disordered.

It belongs to the ClpS family. In terms of assembly, binds to the N-terminal domain of the chaperone ClpA.

Involved in the modulation of the specificity of the ClpAP-mediated ATP-dependent protein degradation. The protein is ATP-dependent Clp protease adapter protein ClpS of Gluconobacter oxydans (strain 621H) (Gluconobacter suboxydans).